Reading from the N-terminus, the 142-residue chain is Hemoglobin anodic subunit alpha (142 aa).

Serine 1 bears the N-acetylserine mark. The Globin domain maps to 1–142 (SLSTKDKAVV…LALALADRYR (142 aa)). Residue histidine 59 coordinates O2. Histidine 88 lines the heme b pocket.

This sequence belongs to the globin family. In terms of assembly, heterotetramer of two alpha chains and two beta chains. As to expression, red blood cells.

In terms of biological role, involved in oxygen transport from gills to the various peripheral tissues. The polypeptide is Hemoglobin anodic subunit alpha (Gymnothorax unicolor (Brown moray)).